The primary structure comprises 202 residues: uncharacterized protein (202 aa).

The tract at residues 1-20 (MVGAVTQIADRPTDPSPWSP) is disordered. The 61-residue stretch at 19 to 79 (SPRETELLAV…AAFIEGIRQV (61 aa)) folds into the HTH tetR-type domain.

This is an uncharacterized protein from Mycobacterium bovis (strain ATCC BAA-935 / AF2122/97).